The sequence spans 161 residues: Nucleotide-binding protein XOO0647 (161 aa).

Belongs to the YajQ family.

Nucleotide-binding protein. The chain is Nucleotide-binding protein XOO0647 from Xanthomonas oryzae pv. oryzae (strain MAFF 311018).